Here is a 314-residue protein sequence, read N- to C-terminus: MAEKTTSTRYAVVTGGNKGIGYETCRQLASKGVVVVLTSRDEKKGIEAIERLKEESNFTDEHILFHQLDIMDPASISSLVNLIKTKFGRLDILINNAGISGVMVEGDVQVLKEILERYISIVFTEDENGEEGGWTKSGPGSVTNYELTKECIETNYYGAKRMTEAFIPLLQLSNSPRIVNVASSMGKLKLLCNKWAIEVLRDADSLTEEKVDQVVNEFLKDFTEKSTESKGWPSYFTAYKVSKASLIAYTRVLATKYPNFRINSVCPGYCKTDVNANTGSLTAGEGAESLVNLALLPNDGPSGLFFYRKEVTFF.

13 to 36 (VTGGNKGIGYETCRQLASKGVVVV) provides a ligand contact to NADP(+). Position 183 (Ser-183) interacts with substrate. The active-site Proton acceptor is Tyr-239.

It belongs to the short-chain dehydrogenases/reductases (SDR) family. In terms of assembly, monomer. Expressed in flowers and red fruit tissues. Not detected in leaves, stems, roots or green fruits.

It catalyses the reaction (+)-neomenthol + NADP(+) = (1R,4S)-menthone + NADPH + H(+). Its function is as follows. Involved in basal resistance against pathogens. The sequence is that of (+)-neomenthol dehydrogenase (MNR1) from Capsicum annuum (Capsicum pepper).